The chain runs to 634 residues: ATP-dependent clpX-like chaperone, mitochondrial (634 aa).

The N-terminal 56 residues, 1–56 (MSSCGACTCGAAAARLLTTSLTSAQRGISCGRIHVPVLGRLGTTLDAQALRRAPLR), are a transit peptide targeting the mitochondrion. The interval 69–102 (DGANKDGSGDGNKKSVTEGSSKKSGSGNSGKGGN) is disordered. Residues 70 to 84 (GANKDGSGDGNKKSV) show a composition bias toward basic and acidic residues. The span at 85–94 (TEGSSKKSGS) shows a compositional bias: low complexity. The region spanning 94-147 (SGNSGKGGNQLRCPKCGDLCTHVETFVSSTRFVKCEKCHHFFVVLSEADSKKSI) is the ClpX-type ZB domain. Zn(2+) is bound by residues Cys106, Cys109, Cys128, and Cys131. 295 to 302 (PTGSGKTL) contacts ATP. Lys438 is subject to N6-acetyllysine. Residues 599-611 (KEPGYIRAPSKES) show a composition bias toward basic and acidic residues. The segment at 599–634 (KEPGYIRAPSKESSEEEYDSGVEEDGWPRQADAANS) is disordered. Positions 612 to 623 (SEEEYDSGVEED) are enriched in acidic residues. Ser618 is modified (phosphoserine).

The protein belongs to the ClpX chaperone family. Homohexamer that forms a ring structure; this hexamerization requires ATP binding. Component of the ClpXP complex formed by the assembly of two CLPP heptameric rings with two CLPX hexameric rings, giving rise to a symmetrical structure with two central CLPP rings flanked by a CLPX ring at either end of the complex. Interacts with TFAM. Detected in liver (at protein level).

It localises to the mitochondrion. The protein resides in the mitochondrion matrix. The protein localises to the mitochondrion nucleoid. The enzyme catalyses ATP + H2O = ADP + phosphate + H(+). ATP-dependent chaperone that functions as an unfoldase. As part of the ClpXP protease complex, it recognizes specific protein substrates, unfolds them using energy derived from ATP hydrolysis, and then translocates them to the proteolytic subunit (CLPP) of the ClpXP complex for degradation. Thanks to its chaperone activity, it also functions in the incorporation of the pyridoxal phosphate cofactor into 5-aminolevulinate synthase, thereby activating 5-aminolevulinate (ALA) synthesis, the first step in heme biosynthesis. This chaperone is also involved in the control of mtDNA nucleoid distribution, by regulating mitochondrial transcription factor A (TFAM) activity. This Mus musculus (Mouse) protein is ATP-dependent clpX-like chaperone, mitochondrial.